The chain runs to 485 residues: Terminase, large subunit (485 aa).

ADP is bound by residues 17–22, 40–45, and R79; these read KPHHVQ and QSGKSE. The segment at 22 to 197 is ATPase activity; sequence QLAIHRSTAK…EFFLMGWRGG (176 aa). 2 residues coordinate ATP: Q97 and Q99. The short motif at 125 to 131 is the Walker A motif element; the sequence is SEFRGKS. The Walker B motif motif lies at 145–150; the sequence is FVILDE. E150 (for ATPase activity) is an active-site residue. Residues 256–438 form a nuclease region; it reads SNSVFSGLDM…DIVMSLALAY (183 aa). Mg(2+) is bound by residues D294, D347, and D429.

It belongs to the Tequatrovirus large terminase family. Interacts with the terminase small subunit; the active complex is composed of a pentamer of terminase large subunits and a dodecamer of terminase small subunits. Interacts with the portal protein. Mg(2+) serves as cofactor.

In terms of biological role, the terminase large subunit acts as an ATP driven molecular motor necessary for viral DNA translocation into empty capsids and as an endonuclease that cuts the viral genome to initiate and to end a packaging reaction The terminase lies at a unique vertex of the procapsid and is composed of two subunits, a small terminase subunit involved in viral DNA recognition (packaging sequence), and a large terminase subunit possessing endonucleolytic and ATPase activities. Both terminase subunits heterooligomerize and are docked on the portal protein to form the packaging machine. The terminase large subunit exhibits endonuclease activity and cleaves the viral genome concatemer. Once the capsid is packaged with the DNA, the terminase complex is substituted by the tail. In Thermus thermophilus (Thermus thermophilus phage P23-45), this protein is Terminase, large subunit.